The primary structure comprises 86 residues: Small ribosomal subunit protein bS20 (86 aa).

The protein belongs to the bacterial ribosomal protein bS20 family.

Binds directly to 16S ribosomal RNA. The sequence is that of Small ribosomal subunit protein bS20 from Paenarthrobacter aurescens (strain TC1).